Here is a 321-residue protein sequence, read N- to C-terminus: Glucokinase (321 aa).

Residue 8–13 (GDVGGT) coordinates ATP.

The protein belongs to the bacterial glucokinase family.

Its subcellular location is the cytoplasm. It carries out the reaction D-glucose + ATP = D-glucose 6-phosphate + ADP + H(+). This Shigella flexneri serotype 5b (strain 8401) protein is Glucokinase.